The following is a 737-amino-acid chain: Probable serine/threonine-protein kinase DDB_G0269628 (737 aa).

The region spanning Tyr8 to Leu488 is the Protein kinase domain. Residues Leu14–Ala22 and Lys36 contribute to the ATP site. Disordered regions lie at residues Asn155–Ser251 and Thr278–Asn298. Residues Thr156 to Val167 are compositionally biased toward polar residues. Positions Asn168–Pro229 are enriched in low complexity. Asp349 serves as the catalytic Proton acceptor.

This sequence belongs to the protein kinase superfamily. NEK Ser/Thr protein kinase family. NIMA subfamily.

The catalysed reaction is L-seryl-[protein] + ATP = O-phospho-L-seryl-[protein] + ADP + H(+). It carries out the reaction L-threonyl-[protein] + ATP = O-phospho-L-threonyl-[protein] + ADP + H(+). This Dictyostelium discoideum (Social amoeba) protein is Probable serine/threonine-protein kinase DDB_G0269628.